We begin with the raw amino-acid sequence, 342 residues long: UDP-3-O-acylglucosamine N-acyltransferase (342 aa).

The active-site Proton acceptor is His242.

This sequence belongs to the transferase hexapeptide repeat family. LpxD subfamily. Homotrimer.

It carries out the reaction a UDP-3-O-[(3R)-3-hydroxyacyl]-alpha-D-glucosamine + a (3R)-hydroxyacyl-[ACP] = a UDP-2-N,3-O-bis[(3R)-3-hydroxyacyl]-alpha-D-glucosamine + holo-[ACP] + H(+). It participates in bacterial outer membrane biogenesis; LPS lipid A biosynthesis. Its function is as follows. Catalyzes the N-acylation of UDP-3-O-acylglucosamine using 3-hydroxyacyl-ACP as the acyl donor. Is involved in the biosynthesis of lipid A, a phosphorylated glycolipid that anchors the lipopolysaccharide to the outer membrane of the cell. This chain is UDP-3-O-acylglucosamine N-acyltransferase, found in Leptothrix cholodnii (strain ATCC 51168 / LMG 8142 / SP-6) (Leptothrix discophora (strain SP-6)).